The primary structure comprises 244 residues: 7-cyano-7-deazaguanine synthase (244 aa).

14 to 24 is an ATP binding site; sequence FSGGQDSATCV. The Zn(2+) site is built by cysteine 202, cysteine 217, cysteine 220, and cysteine 223.

It belongs to the QueC family. Zn(2+) serves as cofactor.

The catalysed reaction is 7-carboxy-7-deazaguanine + NH4(+) + ATP = 7-cyano-7-deazaguanine + ADP + phosphate + H2O + H(+). It participates in purine metabolism; 7-cyano-7-deazaguanine biosynthesis. Its function is as follows. Catalyzes the ATP-dependent conversion of 7-carboxy-7-deazaguanine (CDG) to 7-cyano-7-deazaguanine (preQ(0)). The polypeptide is 7-cyano-7-deazaguanine synthase (Burkholderia ambifaria (strain MC40-6)).